The sequence spans 387 residues: 2-alkyl-3-oxoalkanoate reductase (387 aa).

The active-site Proton acceptor is tyrosine 190. An NADP(+)-binding site is contributed by lysine 194.

It belongs to the 3-beta-HSD family.

It carries out the reaction a (2R,3S)-2-alkyl-3-hydroxyalkanoate + NADP(+) = an (R)-2-alkyl-3-oxoalkanoate + NADPH + H(+). Involved in olefin biosynthesis. Catalyzes the reversible stereospecific NADPH-dependent reduction of 2-alkyl-3-oxoalkanoic acids to 2-alkyl-3-hydroxyalkanoic acids. The S.oneidensis oleABCD genes produce 3,6,9,12,15,19,22,25,28-hentriacontanonaene, which may aid the cells in adapting to a sudden drop in temperature. The chain is 2-alkyl-3-oxoalkanoate reductase from Shewanella oneidensis (strain ATCC 700550 / JCM 31522 / CIP 106686 / LMG 19005 / NCIMB 14063 / MR-1).